The chain runs to 423 residues: Protein SOSEKI 5 (423 aa).

The tract at residues 1-33 is disordered; that stretch reads MSSRVFRATPDNNYLVPRRSKDQQDTSPDRNRI. The segment covering 19-33 has biased composition (basic and acidic residues); it reads RSKDQQDTSPDRNRI. Residues 45–136 form a DIX-like oligomerization domain region; the sequence is RKVPVVYYLC…YVLKGSEVLD (92 aa). Disordered regions lie at residues 150-172 and 196-258; these read SSFR…PAVI and SSAE…SPET. Polar residues predominate over residues 196 to 211; it reads SSAESTQRLAADASTQ. 2 consecutive short sequence motifs (association to cell membranes) follow at residues 233–234 and 303–304; these read AS and CG. The interval 379 to 423 is disordered; the sequence is SSSYNADRCSRMGPTTEKDEEEAVRAKCIPRKPKPVAKRNNGGQQ. A compositionally biased stretch (basic residues) spans 406 to 415; sequence CIPRKPKPVA.

Belongs to the SOSEKI family. In terms of assembly, homodimer. Forms long polymer filaments with other SOKs proteins polymers (e.g. SOK1, SOK2, SOK3 and SOK4) crucial for polar localization and biological activity. Binds to ANGUSTIFOLIA (AN). Expressed during embryogenesis and in roots.

The protein localises to the cell membrane. Its function is as follows. SOSEKI proteins (SOK1-5) locally interpret global polarity cues and can influence cell division orientation to coordinate cell polarization relative to body axes. The sequence is that of Protein SOSEKI 5 from Arabidopsis thaliana (Mouse-ear cress).